The primary structure comprises 338 residues: tRNA dimethylallyltransferase (338 aa).

An ATP-binding site is contributed by 13–20 (GPTASGKT). 15–20 (TASGKT) is a binding site for substrate. 2 interaction with substrate tRNA regions span residues 38–41 (DSTL) and 162–166 (QRVSR).

Belongs to the IPP transferase family. Monomer. Mg(2+) serves as cofactor.

The catalysed reaction is adenosine(37) in tRNA + dimethylallyl diphosphate = N(6)-dimethylallyladenosine(37) in tRNA + diphosphate. Functionally, catalyzes the transfer of a dimethylallyl group onto the adenine at position 37 in tRNAs that read codons beginning with uridine, leading to the formation of N6-(dimethylallyl)adenosine (i(6)A). This is tRNA dimethylallyltransferase from Cellvibrio japonicus (strain Ueda107) (Pseudomonas fluorescens subsp. cellulosa).